Reading from the N-terminus, the 570-residue chain is MDVEKIALKHALINAIEHGGKANLKAVIGKVLGENPELRPRAKEIIPIINKVVEEVNSLARDEQLEKLKDIYPEYFEKKEEKKEKKGLPLLPKAEKGKVVTRFAPNPDGAFHLGNARAAILSYEYAKMYGGKFILRFDDTDPKVKRPEPIFYKMIIEDLEWLGIKPDEIVYASDRLEIYYKYAEELIKMGKAYVCTCPPEKFRELRDKGIPCPHRDEPVEVQLERWKKMLNGEYKEGEAVVRIKTDLNHPNPAVRDWPALRIIDNPNHPRTGNKYRVWPLYNFASAIDDHELGVTHIFRGQEHAENETRQRYIYEYFGWEYPVTIHHGRLSIEGVVLSKSKTRKGIEEGKYLGWDDPRLGTIRALRRRGILPEAIKELIIEVGLKKSDATISWENLAAINRKLVDPIANRYFFVADPIPMEVEGAPEFIAEIPLHPDHPERGVRRLKFTPERPVYVSKDDLNLLKPGNFVRLKDLFNVEILEVGDKIRARFYSFEYEIAKKNRWKMVHWVTEGRPCEVIIPEGDELVVRKGLLEKDAKVQVNEIVQFERFGFVRIDRIEGDKVIAIYAHK.

Positions 105 to 115 (PNPDGAFHLGN) match the 'HIGH' region motif.

The protein belongs to the class-I aminoacyl-tRNA synthetase family. Glutamate--tRNA ligase type 2 subfamily.

It is found in the cytoplasm. It catalyses the reaction tRNA(Glu) + L-glutamate + ATP = L-glutamyl-tRNA(Glu) + AMP + diphosphate. In terms of biological role, catalyzes the attachment of glutamate to tRNA(Glu) in a two-step reaction: glutamate is first activated by ATP to form Glu-AMP and then transferred to the acceptor end of tRNA(Glu). The polypeptide is Glutamate--tRNA ligase (Pyrococcus horikoshii (strain ATCC 700860 / DSM 12428 / JCM 9974 / NBRC 100139 / OT-3)).